Consider the following 312-residue polypeptide: tRNA dimethylallyltransferase (312 aa).

11–18 serves as a coordination point for ATP; it reads GLTATGKT. 13 to 18 contacts substrate; sequence TATGKT. The segment at 36–39 is interaction with substrate tRNA; it reads DSMC.

This sequence belongs to the IPP transferase family. Monomer. Requires Mg(2+) as cofactor.

It carries out the reaction adenosine(37) in tRNA + dimethylallyl diphosphate = N(6)-dimethylallyladenosine(37) in tRNA + diphosphate. In terms of biological role, catalyzes the transfer of a dimethylallyl group onto the adenine at position 37 in tRNAs that read codons beginning with uridine, leading to the formation of N6-(dimethylallyl)adenosine (i(6)A). The polypeptide is tRNA dimethylallyltransferase (Caldicellulosiruptor bescii (strain ATCC BAA-1888 / DSM 6725 / KCTC 15123 / Z-1320) (Anaerocellum thermophilum)).